Reading from the N-terminus, the 452-residue chain is RRHHSPLLVSLIGGQTFKSSHSGAAYFGGICSPTHGGGVNEYGNIGAMAITLAQTLGQNLGMMWNKPRTTTGDCKCPDLWRGCIMEDTGFYLPQKFSRCSVDEYSKFLQDGGGSCLFNKPLKLLDPPSCGNGFIEIGEECDCGSPAECNKSRAGNCCKKCTLSHDAMCSDGLCCRGCKYEPRGTVCRESLNECDVPEACPGDSSACPANLHKQDGYFCDNEQGRCFGGRCKTRDRQCHALWGRGASDRFCYEKLNIEGTEKGNCGRDRQNWIQCSKQDVLCGYLLCSNISGIPQIGELNGDITSMSFYHQNRYLDCRGGQVTLPDGSCLGYVEDGTPCGPNMICLDRRCLPASAFNFSTCPGSWNGVICSDHGVCSNEGKCICHPEWTGKDCSVYDPLPVPKPTGVVEKYKGPSGTNIIIGSIAGAVLIAAIVLGGTGWGFKNIRRGRSGGG.

One can recognise a Peptidase M12B domain in the interval 1-120 (RRHHSPLLVS…GGGSCLFNKP (120 aa)). Topologically, residues 1–417 (RRHHSPLLVS…EKYKGPSGTN (417 aa)) are extracellular. Disulfide bonds link cysteine 31–cysteine 115, cysteine 74–cysteine 99, and cysteine 76–cysteine 83. A Disintegrin domain is found at 126–214 (PPSCGNGFIE…ACPANLHKQD (89 aa)). A glycan (N-linked (GlcNAc...) asparagine) is linked at asparagine 149. Cysteine 186 and cysteine 206 are disulfide-bonded. N-linked (GlcNAc...) asparagine glycans are attached at residues asparagine 288 and asparagine 356. 3 disulfides stabilise this stretch: cysteine 360-cysteine 375, cysteine 369-cysteine 381, and cysteine 383-cysteine 392. Residues 360-416 (CPGSWNGVICSDHGVCSNEGKCICHPEWTGKDCSVYDPLPVPKPTGVVEKYKGPSGT) enclose the EGF-like domain. A helical membrane pass occupies residues 418–438 (IIIGSIAGAVLIAAIVLGGTG). The Cytoplasmic portion of the chain corresponds to 439 to 452 (WGFKNIRRGRSGGG).

The precursor is cleaved by a furin endopeptidase. In terms of tissue distribution, detected in testis and barely expressed in heart and muscle. Not detectable in liver.

The protein resides in the presynaptic cell membrane. It localises to the perikaryon. It is found in the cell projection. Its subcellular location is the axon. Functionally, probable ligand for integrin in the brain. This is a non-catalytic metalloprotease-like protein. This is Disintegrin and metalloproteinase domain-containing protein 11 (adam11) from Xenopus laevis (African clawed frog).